The sequence spans 393 residues: Formate-dependent phosphoribosylglycinamide formyltransferase (393 aa).

Residues 22–23 (EL) and Glu-82 each bind N(1)-(5-phospho-beta-D-ribosyl)glycinamide. Residues Arg-114, Lys-155, 160-165 (SSGKGQ), 195-198 (EGFV), and Glu-203 each bind ATP. In terms of domain architecture, ATP-grasp spans 119–308 (RLAAEDLGIP…EFALHLRAIL (190 aa)). Mg(2+) contacts are provided by Glu-267 and Glu-279. N(1)-(5-phospho-beta-D-ribosyl)glycinamide-binding positions include Asp-286, Lys-356, and 363-364 (RR).

Belongs to the PurK/PurT family. As to quaternary structure, homodimer.

The catalysed reaction is N(1)-(5-phospho-beta-D-ribosyl)glycinamide + formate + ATP = N(2)-formyl-N(1)-(5-phospho-beta-D-ribosyl)glycinamide + ADP + phosphate + H(+). It functions in the pathway purine metabolism; IMP biosynthesis via de novo pathway; N(2)-formyl-N(1)-(5-phospho-D-ribosyl)glycinamide from N(1)-(5-phospho-D-ribosyl)glycinamide (formate route): step 1/1. Involved in the de novo purine biosynthesis. Catalyzes the transfer of formate to 5-phospho-ribosyl-glycinamide (GAR), producing 5-phospho-ribosyl-N-formylglycinamide (FGAR). Formate is provided by PurU via hydrolysis of 10-formyl-tetrahydrofolate. This Hydrogenovibrio crunogenus (strain DSM 25203 / XCL-2) (Thiomicrospira crunogena) protein is Formate-dependent phosphoribosylglycinamide formyltransferase.